The sequence spans 289 residues: Undecaprenyl-diphosphatase (289 aa).

Helical transmembrane passes span 23–43 (LFLG…TAHL), 56–76 (GVAV…AYFW), 104–124 (SAIV…KLFW), 135–155 (IPAI…AENV), 165–185 (LSFW…IPGV), 210–230 (FLLG…QAFG), 235–255 (VDVF…WIAI), and 269–289 (IFIT…YLAF).

The protein belongs to the UppP family.

Its subcellular location is the cell inner membrane. The catalysed reaction is di-trans,octa-cis-undecaprenyl diphosphate + H2O = di-trans,octa-cis-undecaprenyl phosphate + phosphate + H(+). Its function is as follows. Catalyzes the dephosphorylation of undecaprenyl diphosphate (UPP). Confers resistance to bacitracin. The protein is Undecaprenyl-diphosphatase of Prochlorococcus marinus (strain SARG / CCMP1375 / SS120).